We begin with the raw amino-acid sequence, 220 residues long: Deoxyribose-phosphate aldolase (220 aa).

Catalysis depends on D89, which acts as the Proton donor/acceptor. Residue K151 is the Schiff-base intermediate with acetaldehyde of the active site. The active-site Proton donor/acceptor is K180.

Belongs to the DeoC/FbaB aldolase family. DeoC type 1 subfamily.

Its subcellular location is the cytoplasm. The enzyme catalyses 2-deoxy-D-ribose 5-phosphate = D-glyceraldehyde 3-phosphate + acetaldehyde. Its pathway is carbohydrate degradation; 2-deoxy-D-ribose 1-phosphate degradation; D-glyceraldehyde 3-phosphate and acetaldehyde from 2-deoxy-alpha-D-ribose 1-phosphate: step 2/2. Functionally, catalyzes a reversible aldol reaction between acetaldehyde and D-glyceraldehyde 3-phosphate to generate 2-deoxy-D-ribose 5-phosphate. The protein is Deoxyribose-phosphate aldolase of Streptococcus pneumoniae (strain Taiwan19F-14).